Reading from the N-terminus, the 295-residue chain is Protease HtpX (295 aa).

Transmembrane regions (helical) follow at residues 5 to 25 and 43 to 63; these read VILFLATNLAVLLVLSISMRL and ALLIFAAIIGFSGSLISLAIS. Histidine 148 contributes to the Zn(2+) binding site. Residue glutamate 149 is part of the active site. Histidine 152 provides a ligand contact to Zn(2+). The next 2 membrane-spanning stretches (helical) occupy residues 159 to 179 and 198 to 218; these read VTLALIQGVVNTFVIFLARII and FFITTLIAQTVLAILASLIVL. Glutamate 225 contacts Zn(2+).

It belongs to the peptidase M48B family. The cofactor is Zn(2+).

The protein resides in the cell inner membrane. In Nitrosococcus oceani (strain ATCC 19707 / BCRC 17464 / JCM 30415 / NCIMB 11848 / C-107), this protein is Protease HtpX.